Consider the following 136-residue polypeptide: Small ribosomal subunit protein bS16 (136 aa).

Basic residues predominate over residues 114-123 (TLKARRRRAK). Residues 114 to 136 (TLKARRRRAKKEAEAASASSAEG) are disordered.

It belongs to the bacterial ribosomal protein bS16 family.

This chain is Small ribosomal subunit protein bS16, found in Chlorobium chlorochromatii (strain CaD3).